The primary structure comprises 706 residues: Protein psiG (706 aa).

Positions 1 to 23 are cleaved as a signal peptide; it reads MKIILTLLIILFSLNKNLNFVSS. Residues 24 to 644 lie on the Extracellular side of the membrane; it reads EVTKSRICSI…FVCKPAAIIS (621 aa). Residues N95, N107, N212, N296, N429, N521, N532, and N616 are each glycosylated (N-linked (GlcNAc...) asparagine). In terms of domain architecture, PA14 spans 109–253; that stretch reads TLDKSSNIYS…SDYCGVCQGD (145 aa). A helical membrane pass occupies residues 645-665; the sequence is TSVIVGVSVAAAVVAIAIVVA. The Cytoplasmic segment spans residues 666-706; sequence SKKGYDAWAASNNNSLASLTSNPLYENPTGNGDNPMYQPNS. The segment at 687–706 is disordered; it reads NPLYENPTGNGDNPMYQPNS. Positions 693–706 are enriched in polar residues; it reads PTGNGDNPMYQPNS.

This sequence belongs to the prespore-cell-inducing factor family.

The protein localises to the membrane. This chain is Protein psiG (psiG-1), found in Dictyostelium discoideum (Social amoeba).